The sequence spans 378 residues: Probable endopolygalacturonase NFIA_008150 (378 aa).

A signal peptide spans Met-1–Ala-19. The propeptide occupies Ser-20–Arg-35. Residues Cys-38 and Cys-56 are joined by a disulfide bond. PbH1 repeat units follow at residues Thr-147–Gly-169, Cys-170–Ser-200, and Ser-201–Ser-222. Asp-215 (proton donor) is an active-site residue. A disulfide bridge connects residues Cys-217 and Cys-233. The active site involves His-237. PbH1 repeat units lie at residues Arg-247–Ala-273 and Ile-281–Gln-303. The N-linked (GlcNAc...) asparagine glycan is linked to Asn-254. Asn-327 carries an N-linked (GlcNAc...) asparagine glycan. 2 disulfide bridges follow: Cys-345–Cys-350 and Cys-369–Cys-378.

The protein belongs to the glycosyl hydrolase 28 family.

It is found in the secreted. The enzyme catalyses (1,4-alpha-D-galacturonosyl)n+m + H2O = (1,4-alpha-D-galacturonosyl)n + (1,4-alpha-D-galacturonosyl)m.. Its function is as follows. Involved in maceration and soft-rotting of plant tissue. Hydrolyzes the 1,4-alpha glycosidic bonds of de-esterified pectate in the smooth region of the plant cell wall. The polypeptide is Probable endopolygalacturonase NFIA_008150 (Neosartorya fischeri (strain ATCC 1020 / DSM 3700 / CBS 544.65 / FGSC A1164 / JCM 1740 / NRRL 181 / WB 181) (Aspergillus fischerianus)).